A 262-amino-acid chain; its full sequence is Acetylglutamate kinase (262 aa).

Residues 46–47 (GG), arginine 68, and asparagine 160 contribute to the substrate site.

Belongs to the acetylglutamate kinase family. ArgB subfamily.

Its subcellular location is the cytoplasm. It carries out the reaction N-acetyl-L-glutamate + ATP = N-acetyl-L-glutamyl 5-phosphate + ADP. Its pathway is amino-acid biosynthesis; L-arginine biosynthesis; N(2)-acetyl-L-ornithine from L-glutamate: step 2/4. In terms of biological role, catalyzes the ATP-dependent phosphorylation of N-acetyl-L-glutamate. The protein is Acetylglutamate kinase of Shewanella amazonensis (strain ATCC BAA-1098 / SB2B).